Consider the following 161-residue polypeptide: Phosphopantetheine adenylyltransferase (161 aa).

Substrate is bound at residue Thr-11. Residues 11-12 (TF) and His-19 contribute to the ATP site. Substrate is bound by residues Lys-43, Thr-75, and Arg-89. ATP is bound by residues 90 to 92 (GLR), Glu-100, and 125 to 131 (YSFLSSS).

The protein belongs to the bacterial CoaD family. In terms of assembly, homohexamer. Mg(2+) serves as cofactor.

It localises to the cytoplasm. It carries out the reaction (R)-4'-phosphopantetheine + ATP + H(+) = 3'-dephospho-CoA + diphosphate. It participates in cofactor biosynthesis; coenzyme A biosynthesis; CoA from (R)-pantothenate: step 4/5. Reversibly transfers an adenylyl group from ATP to 4'-phosphopantetheine, yielding dephospho-CoA (dPCoA) and pyrophosphate. This is Phosphopantetheine adenylyltransferase from Listeria welshimeri serovar 6b (strain ATCC 35897 / DSM 20650 / CCUG 15529 / CIP 8149 / NCTC 11857 / SLCC 5334 / V8).